We begin with the raw amino-acid sequence, 370 residues long: Glutamine synthetase (370 aa).

The 80-residue stretch at 23–102 (VLAEYVWIDA…VLTECWNNDG (80 aa)) folds into the GS beta-grasp domain. Residues 40–69 (CKTLDKKPSSVEDLPEWNFDGSSTGQAPGH) are disordered. The GS catalytic domain maps to 109-370 (HRHESAKLMK…FKEYARESSD (262 aa)).

Belongs to the glutamine synthetase family. Homooctamer.

It localises to the cytoplasm. The enzyme catalyses L-glutamate + NH4(+) + ATP = L-glutamine + ADP + phosphate + H(+). The sequence is that of Glutamine synthetase (GLN1) from Debaryomyces hansenii (strain ATCC 36239 / CBS 767 / BCRC 21394 / JCM 1990 / NBRC 0083 / IGC 2968) (Yeast).